The sequence spans 122 residues: Large ribosomal subunit protein bL19 (122 aa).

Belongs to the bacterial ribosomal protein bL19 family.

Its function is as follows. This protein is located at the 30S-50S ribosomal subunit interface and may play a role in the structure and function of the aminoacyl-tRNA binding site. This is Large ribosomal subunit protein bL19 from Prosthecochloris aestuarii (strain DSM 271 / SK 413).